The following is a 431-amino-acid chain: Dual-specificity RNA methyltransferase RlmN (431 aa).

The tract at residues 1-26 (MATASLDTARPERRAGSDPFIEKTPE) is disordered. Over residues 9–26 (ARPERRAGSDPFIEKTPE) the composition is skewed to basic and acidic residues. Catalysis depends on E138, which acts as the Proton acceptor. In terms of domain architecture, Radical SAM core spans 144 to 394 (ANDRGTLCVS…VRTPRGRDIL (251 aa)). An intrachain disulfide couples C151 to C397. [4Fe-4S] cluster-binding residues include C158, C162, and C165. Residues 223–224 (GE), S255, 277–279 (SLH), and N354 each bind S-adenosyl-L-methionine. C397 (S-methylcysteine intermediate) is an active-site residue.

The protein belongs to the radical SAM superfamily. RlmN family. The cofactor is [4Fe-4S] cluster.

It localises to the cytoplasm. It catalyses the reaction adenosine(2503) in 23S rRNA + 2 reduced [2Fe-2S]-[ferredoxin] + 2 S-adenosyl-L-methionine = 2-methyladenosine(2503) in 23S rRNA + 5'-deoxyadenosine + L-methionine + 2 oxidized [2Fe-2S]-[ferredoxin] + S-adenosyl-L-homocysteine. The enzyme catalyses adenosine(37) in tRNA + 2 reduced [2Fe-2S]-[ferredoxin] + 2 S-adenosyl-L-methionine = 2-methyladenosine(37) in tRNA + 5'-deoxyadenosine + L-methionine + 2 oxidized [2Fe-2S]-[ferredoxin] + S-adenosyl-L-homocysteine. Its function is as follows. Specifically methylates position 2 of adenine 2503 in 23S rRNA and position 2 of adenine 37 in tRNAs. m2A2503 modification seems to play a crucial role in the proofreading step occurring at the peptidyl transferase center and thus would serve to optimize ribosomal fidelity. This Methylobacterium sp. (strain 4-46) protein is Dual-specificity RNA methyltransferase RlmN.